A 327-amino-acid chain; its full sequence is Phenylalanine--tRNA ligase alpha subunit (327 aa).

Glutamate 252 lines the Mg(2+) pocket.

The protein belongs to the class-II aminoacyl-tRNA synthetase family. Phe-tRNA synthetase alpha subunit type 1 subfamily. Tetramer of two alpha and two beta subunits. The cofactor is Mg(2+).

The protein resides in the cytoplasm. The catalysed reaction is tRNA(Phe) + L-phenylalanine + ATP = L-phenylalanyl-tRNA(Phe) + AMP + diphosphate + H(+). The chain is Phenylalanine--tRNA ligase alpha subunit from Photobacterium profundum (strain SS9).